Consider the following 71-residue polypeptide: MFTMKKSLLLIFFLGTINLSLCEEERNADEDEKRDGDDESDVEVQKRFMGTALKIAANVLPAAFCKIFKKC.

Positions 1-22 (MFTMKKSLLLIFFLGTINLSLC) are cleaved as a signal peptide. A propeptide spans 23–45 (EEERNADEDEKRDGDDESDVEVQ) (removed in mature form). A disulfide bond links C65 and C71.

It belongs to the frog skin active peptide (FSAP) family. Brevinin subfamily. Expressed by the skin glands.

It is found in the secreted. Functionally, antimicrobial peptide. Active against a variety of Gram-negative and Gram-positive bacterial strains. Active against fungus C.glabrata 090902 and C.albicans ATCC 10231. Shows hemolytic activity against human erythrocytes. The sequence is that of Brevinin-1SN2 from Sylvirana spinulosa (Fine-spined frog).